Consider the following 501-residue polypeptide: Glutamate--tRNA ligase (501 aa).

The 'HIGH' region motif lies at 11–21; the sequence is PSPTGFLHIGN. The short motif at 257–261 is the 'KMSKS' region element; the sequence is KLSKR. Lys260 is an ATP binding site.

This sequence belongs to the class-I aminoacyl-tRNA synthetase family. Glutamate--tRNA ligase type 1 subfamily. As to quaternary structure, monomer.

The protein localises to the cytoplasm. It carries out the reaction tRNA(Glu) + L-glutamate + ATP = L-glutamyl-tRNA(Glu) + AMP + diphosphate. In terms of biological role, catalyzes the attachment of glutamate to tRNA(Glu) in a two-step reaction: glutamate is first activated by ATP to form Glu-AMP and then transferred to the acceptor end of tRNA(Glu). This Limosilactobacillus reuteri subsp. reuteri (strain JCM 1112) (Lactobacillus reuteri) protein is Glutamate--tRNA ligase.